Reading from the N-terminus, the 87-residue chain is Small ribosomal subunit protein bS20 (87 aa).

This sequence belongs to the bacterial ribosomal protein bS20 family.

In terms of biological role, binds directly to 16S ribosomal RNA. In Corynebacterium jeikeium (strain K411), this protein is Small ribosomal subunit protein bS20.